We begin with the raw amino-acid sequence, 825 residues long: NT-3 growth factor receptor (825 aa).

The N-terminal stretch at 1–31 (MDVSLCPAKCSFWRIFLLGSVWLDYVGSVLA) is a signal peptide. Cystine bridges form between Cys-32/Cys-38 and Cys-36/Cys-45. Topologically, residues 32 to 429 (CPANCVCSKT…TVTHKPEEDT (398 aa)) are extracellular. Asn-68, Asn-72, and Asn-79 each carry an N-linked (GlcNAc...) asparagine glycan. LRR repeat units lie at residues 104 to 125 (GLQKLTIKNSGLRSIQPRAFAK) and 128 to 149 (HLRYINLSSNRLTTLSWQLFQT). Residues Asn-133 and Asn-163 are each glycosylated (N-linked (GlcNAc...) asparagine). The 50-residue stretch at 160 to 209 (NFFNCSCDIRWMQLWQEQGEARLNSQNLYCINADGSQLPLFRMNISQCDL) folds into the LRRCT domain. Intrachain disulfides connect Cys-164-Cys-189 and Cys-166-Cys-207. N-linked (GlcNAc...) asparagine glycans are attached at residues Asn-203, Asn-218, Asn-232, Asn-259, Asn-267, Asn-272, and Asn-294. Ig-like C2-type domains follow at residues 210-300 (PEIS…VALT) and 309-382 (SLEE…IAKN). The cysteines at positions 231 and 284 are disulfide-linked. A disulfide bridge links Cys-320 with Cys-362. Asn-375 and Asn-388 each carry an N-linked (GlcNAc...) asparagine glycan. A helical transmembrane segment spans residues 430–453 (FGVSIAVGLAAFACVLLVVLFIMI). At 454 to 825 (NKYGRRSKFG…ATPIYLDILG (372 aa)) the chain is on the cytoplasmic side. A Phosphoserine modification is found at Ser-493. The residue at position 516 (Tyr-516) is a Phosphotyrosine; by autocatalysis. The Protein kinase domain occupies 538–825 (IVLKRELGEG…ATPIYLDILG (288 aa)). ATP is bound by residues 544-552 (LGEGAFGKV) and Lys-572. The Proton acceptor role is filled by Asp-679. Tyr-705, Tyr-709, and Tyr-710 each carry phosphotyrosine; by autocatalysis.

This sequence belongs to the protein kinase superfamily. Tyr protein kinase family. Insulin receptor subfamily. As to quaternary structure, exists in a dynamic equilibrium between monomeric (low affinity) and dimeric (high affinity) structures. Binds SH2B2. Interacts with SQSTM1 and KIDINS220. Interacts with PTPRS. Interacts with MAPK8IP3/JIP3. Post-translationally, ligand-mediated auto-phosphorylation.

The protein resides in the membrane. The catalysed reaction is L-tyrosyl-[protein] + ATP = O-phospho-L-tyrosyl-[protein] + ADP + H(+). Functionally, receptor tyrosine kinase involved in nervous system and probably heart development. Upon binding of its ligand NTF3/neurotrophin-3, NTRK3 autophosphorylates and activates different signaling pathways, including the phosphatidylinositol 3-kinase/AKT and the MAPK pathways, that control cell survival and differentiation. The polypeptide is NT-3 growth factor receptor (NTRK3) (Saimiri boliviensis boliviensis (Bolivian squirrel monkey)).